An 834-amino-acid polypeptide reads, in one-letter code: MDIDYENEISIVLEAKHNQHLNNNNNGCGNANNINNENNFLQDDLVYNFLSDEVTLGSDCTTPYTLNNNHIVNSNYIINNNNNNNNMLNDHSSSPMRVPNSSPSLYNNSIESPELVYHDNSNNNNNNNNNINVNDINVNDINSNSTNNNESNNNSSSEGELPCLVDIQQYQYQDMLPFDQQPVVVMQNPIITTTTTTTTTTATIEQQINPSEQQQQQQQQQQQQQQQQQQQQQQQQQHQHLLQEHQHVVNEEVLHMIDPSVDLTNTYMDAAGISDIIASDSSTTTSPSSPSTSNMFLTPMVTTTTTSETSSSSDSSVNIIPNNTNTITNILIKEEDTNNGNNNKKSKKRTIDSRVQNIVHPLTREELLKIAGKEPVQVVDPPTHNQEDERNVKKQRRLIKNRESAQLSRMRKKIYIEDLEKTISDLTQDNSSLKEEVLYLQGLVKQLAAQNSNSNNNSVIDINNNNVNNSQQQQQQHQQQQQLNNSNNNNNNNNNNSTNKQQQSKNVKAAGVCLLLIFFSLGVFFQPPQSSTQRFGAITSFDVKPTHSILSMSDSESSPQKSLRLSSNHHSLPDGTFNTIPIDQQTTATTNTKSLPSYVLNNNDDSDSDYENVNINNNNNNNNNNNNNNNNNNNNNNNNNNNNNNNNNNNNIKRKQHQQNPQSDSFQNRKKIKINLATENTEGDGPLVSKSSATTTTTTTTTTTTSTPKTPQISEDVSIDEIEEPMVHSSQQYIVCSDSPRIVSNNITQTTESLLNSNSTNPITIGLLLPAESLNLHNIVNNIGGGERSILEISCQVSNIRVWNPLSIDIDHQSSIVPASSSSSSASSIFTNHF.

The interval 83–160 is disordered; the sequence is NNNNMLNDHS…SNNNSSSEGE (78 aa). The span at 90–111 shows a compositional bias: polar residues; the sequence is DHSSSPMRVPNSSPSLYNNSIE. Positions 119–157 are enriched in low complexity; sequence DNSNNNNNNNNNINVNDINVNDINSNSTNNNESNNNSSS. Residues 211–246 are a coiled coil; the sequence is SEQQQQQQQQQQQQQQQQQQQQQQQQQHQHLLQEHQ. Residues 378–405 form a disordered region; sequence VVDPPTHNQEDERNVKKQRRLIKNRESA. The bZIP domain occupies 391–454; that stretch reads NVKKQRRLIK…KQLAAQNSNS (64 aa). A basic motif region spans residues 393-402; the sequence is KKQRRLIKNR. A leucine-zipper region spans residues 407–414; that stretch reads LSRMRKKI. Disordered stretches follow at residues 455–504 and 550–712; these read NNNS…QQQS and LSMS…KTPQ. Polar residues predominate over residues 550–595; that stretch reads LSMSDSESSPQKSLRLSSNHHSLPDGTFNTIPIDQQTTATTNTKSL. Low complexity-rich tracts occupy residues 616–651 and 694–707; these read NNNN…NNNN and TTTT…TTST.

This sequence belongs to the bZIP family.

Its subcellular location is the nucleus. In terms of biological role, probable transcriptional regulator. This Dictyostelium discoideum (Social amoeba) protein is Probable basic-leucine zipper transcription factor D (bzpD).